A 211-amino-acid polypeptide reads, in one-letter code: Superoxide dismutase [Cu-Zn], chloroplastic (211 aa).

Residues 1-57 (MQAILAAAMAAQTLLFSATAPPASLFQSPSSARPFHSLRLAAGPAGAAAARALVVAD) constitute a chloroplast transit peptide. H103, H105, and H120 together coordinate Cu cation. Residues C114 and C203 are joined by a disulfide bond. Zn(2+) is bound by residues H120, H128, H137, and D140. A Cu cation-binding site is contributed by H177.

This sequence belongs to the Cu-Zn superoxide dismutase family. In terms of assembly, homotetramer. The cofactor is Cu cation. Zn(2+) is required as a cofactor.

The protein resides in the plastid. Its subcellular location is the chloroplast. The enzyme catalyses 2 superoxide + 2 H(+) = H2O2 + O2. Destroys radicals which are normally produced within the cells and which are toxic to biological systems. The sequence is that of Superoxide dismutase [Cu-Zn], chloroplastic (SODCP) from Oryza sativa subsp. japonica (Rice).